The chain runs to 338 residues: tRNA dimethylallyltransferase (338 aa).

13 to 20 (GPTASGKT) lines the ATP pocket. 15–20 (TASGKT) lines the substrate pocket. Interaction with substrate tRNA regions lie at residues 38–41 (DSTL) and 162–166 (QRVSR).

The protein belongs to the IPP transferase family. As to quaternary structure, monomer. The cofactor is Mg(2+).

It carries out the reaction adenosine(37) in tRNA + dimethylallyl diphosphate = N(6)-dimethylallyladenosine(37) in tRNA + diphosphate. In terms of biological role, catalyzes the transfer of a dimethylallyl group onto the adenine at position 37 in tRNAs that read codons beginning with uridine, leading to the formation of N6-(dimethylallyl)adenosine (i(6)A). This is tRNA dimethylallyltransferase from Cellvibrio japonicus (strain Ueda107) (Pseudomonas fluorescens subsp. cellulosa).